A 516-amino-acid chain; its full sequence is MTYAWLWTLLAFVLTWMVFHLIKMKKAATGDLEAEAEARRDGATDVIIVGAGVAGASLAYALAKDGRRVHVIERDLKEPQRFMGELMQAGGRFMLAQLGLEDCLEDIDAQEAKSLAIYKDGKHATLPFPDDKSFPHEPVGRLLRNGRLVQRLRQKAASLSNVQLEEGTVKSLIEEEGVVKGVTYKNSAGEEITAFAPLTVVCDGCYSNLRRSLVDNTEEVLSYMVGYVTKNSRLEDPHSLHLIFSKPLVCVIYQITSDEVRCVAEVPADSIPSISNGEMSTFLKKSMAPQIPETGNLREIFLKGIEEGLPEIKSTATKSMSSRLCDKRGVIVLGDAFNMRHPIIASGMMVALSDICILRNLLKPLPNLSNTKKVSDLVKSFYIIRKPMSATVNTLASIFSQVLVATTDEAREGMRQGCFNYLARGDFKTRGLMTILGGMNPHPLTLVLHLVAITLTSMGHLLSPFPSPRRFWHSLRILAWALQMLGAHLVDEGFKEMLIPTNAAAYRRNYIATTTV.

The next 2 membrane-spanning stretches (helical) occupy residues 2 to 22 and 43 to 63; these read TYAW…FHLI and ATDV…YALA. FAD is bound by residues 53-54, 73-74, Arg81, Arg153, Val169, Asp335, and Met348; these read VA and ER. A helical membrane pass occupies residues 435 to 455; it reads ILGGMNPHPLTLVLHLVAITL.

This sequence belongs to the squalene monooxygenase family. FAD serves as cofactor. In terms of tissue distribution, expressed mainly in seedlings and inflorescences.

It localises to the membrane. It catalyses the reaction squalene + reduced [NADPH--hemoprotein reductase] + O2 = (S)-2,3-epoxysqualene + oxidized [NADPH--hemoprotein reductase] + H2O + H(+). It participates in terpene metabolism; lanosterol biosynthesis; lanosterol from farnesyl diphosphate: step 2/3. Functionally, catalyzes the stereospecific oxidation of squalene to (S)-2,3-epoxysqualene, and is considered to be a rate-limiting enzyme in steroid biosynthesis. This is Squalene epoxidase 4 (SQE4) from Arabidopsis thaliana (Mouse-ear cress).